The chain runs to 82 residues: MAKILLTFIILTCLIVTITPAVYDYACYKKGCSKIQGRCSTNADCCDGYQCHPQTASWQVVQKNGCYPINPVPCSQLQQKNV.

A signal peptide spans Met-1–Ala-21.

Contains 4 disulfide bonds. As to expression, abundantly expressed by teratocytes, which are extra-embryonic cells released by parasitoid wasps into their hosts during larval eclosion.

The protein localises to the secreted. Functionally, this endoparasitoid wasp peptide has immununosuppressive and insecticidal activities. Suppress cellular immunity which is detectable as a reduction of hemocyte spread index in the host. In vivo, ingestion of this peptide moderately reduces leaf consumption of D.saccharalis, a permissive host for the lepidoptere C.flavipes. This Cotesia flavipes (Parasitic wasp) protein is Teratocyte protein CftICK-IV.